We begin with the raw amino-acid sequence, 322 residues long: Malate dehydrogenase (322 aa).

NAD(+)-binding positions include 10-15 (GSGMIG) and Asp-34. Arg-83 and Arg-89 together coordinate substrate. NAD(+) is bound by residues Asn-96 and 119–121 (ITN). Residues Asn-121 and Arg-152 each contribute to the substrate site. The active-site Proton acceptor is His-176.

The protein belongs to the LDH/MDH superfamily. MDH type 3 family.

The enzyme catalyses (S)-malate + NAD(+) = oxaloacetate + NADH + H(+). In terms of biological role, catalyzes the reversible oxidation of malate to oxaloacetate. The protein is Malate dehydrogenase of Mesorhizobium japonicum (strain LMG 29417 / CECT 9101 / MAFF 303099) (Mesorhizobium loti (strain MAFF 303099)).